Consider the following 436-residue polypeptide: MANPVVAIVGRPNVGKSTIFNRIVGERISIVEDVPGVTRDRIYSRAEWLNHSFYLIDTGGIDIGDEPLLVQIRQQAEIAIDEADVIIFMTNGRDGVTAADEEVAKLLRRSNKPVVLAVNKIDNPEMRDLIYDFYALGFGEPYPISGAHGTGLGDLLDAVVRHFPKGGGQEYEEDVIKFCLIGRPNVGKSSLVNAILGEERVIVSDIAGTTRDAVDTSFVREGQEYVIIDTAGMRKRGKIYESTEKYSVLRALRAIERSDVVLVVLNAEEGIIEQDKKIAGYAHEAGRGVILIVNKWDAIEKDDKTMVEFERKIRDHFPFLDYAPILFVSAKTKQRLHKLLPLVRLVSDNHAMRVQTNVLNEVIMDAVAMNPTPTHNGRRLKVYYMTQVAVKPPTFVAFVNDPELMHFSYERFLENRIRDAFGFEGTPIKIIARPRK.

2 consecutive EngA-type G domains span residues 4 to 167 (PVVA…PKGG) and 176 to 351 (IKFC…DNHA). Residues 10–17 (GRPNVGKS), 57–61 (DTGGI), 119–122 (NKID), 182–189 (GRPNVGKS), 229–233 (DTAGM), and 294–297 (NKWD) contribute to the GTP site. Residues 352 to 436 (MRVQTNVLNE…PIKIIARPRK (85 aa)) enclose the KH-like domain.

The protein belongs to the TRAFAC class TrmE-Era-EngA-EngB-Septin-like GTPase superfamily. EngA (Der) GTPase family. Associates with the 50S ribosomal subunit.

GTPase that plays an essential role in the late steps of ribosome biogenesis. The chain is GTPase Der from Geobacillus kaustophilus (strain HTA426).